The sequence spans 105 residues: Phosphoribosyl-ATP pyrophosphatase (105 aa).

This sequence belongs to the PRA-PH family.

The protein resides in the cytoplasm. The catalysed reaction is 1-(5-phospho-beta-D-ribosyl)-ATP + H2O = 1-(5-phospho-beta-D-ribosyl)-5'-AMP + diphosphate + H(+). The protein operates within amino-acid biosynthesis; L-histidine biosynthesis; L-histidine from 5-phospho-alpha-D-ribose 1-diphosphate: step 2/9. The polypeptide is Phosphoribosyl-ATP pyrophosphatase (Roseobacter denitrificans (strain ATCC 33942 / OCh 114) (Erythrobacter sp. (strain OCh 114))).